Here is a 156-residue protein sequence, read N- to C-terminus: Small ribosomal subunit protein uS7 (156 aa).

It belongs to the universal ribosomal protein uS7 family. As to quaternary structure, part of the 30S ribosomal subunit. Contacts proteins S9 and S11.

One of the primary rRNA binding proteins, it binds directly to 16S rRNA where it nucleates assembly of the head domain of the 30S subunit. Is located at the subunit interface close to the decoding center, probably blocks exit of the E-site tRNA. The polypeptide is Small ribosomal subunit protein uS7 (Enterobacter sp. (strain 638)).